The sequence spans 364 residues: Phosrestin-2 (364 aa).

It belongs to the arrestin family. Phosphorylated, but does not undergo light-induced phosphorylation. As to expression, expressed specifically and abundantly in photoreceptor cells in retina and ocelli.

The protein resides in the cell projection. It is found in the rhabdomere. Functionally, regulates photoreceptor cell deactivation. Arr1 and Arr2 proteins are mediators of rhodopsin inactivation and are essential for the termination of the phototransduction cascade. Involved in regulating normal cycles of per nuclear accumulation in brain circadian neurons and thus is important for normal circadian behavior. In the dark, functions with Arr2 to promote the formation of cytosolic Bdbt foci, which are required for dco localization to photoreceptor nuclei where it phosphorylates and activates degradation of per. The chain is Phosrestin-2 (Arr1) from Drosophila melanogaster (Fruit fly).